Consider the following 303-residue polypeptide: MLWFKNLMVYRLSRDITLRAEEMEKQLASMTFTPCGSQDMAKMGWVPPMGSHSDALTHTANGQIIICARKEEKILPSPVIKQALEAKIQKLEADQGRKLKKTEKDSLKDEVLHSLLPRAFSRFSQTMMWIDTINGLIMVDCASAKKAEDTLALLRKSLGSLPVVPLALENPIELTLTEWVRSGTVAQGFQLLDEAELKAMLEDGGVIRAKKQDLVSDEIAVHIEAGKVVTKLALDWQQRIQFVMCDDGSIKRLKFCDELRDQNEDIDREDFAQRFDADFILMTGELAALIQSLVEGLGGEAQR.

It belongs to the RdgC family.

It is found in the cytoplasm. Its subcellular location is the nucleoid. In terms of biological role, may be involved in recombination. The chain is Recombination-associated protein RdgC from Salmonella newport (strain SL254).